Reading from the N-terminus, the 147-residue chain is Small ribosomal subunit protein bS16 (147 aa).

The disordered stretch occupies residues 89-147 (AWTHGNNPKKAEPGKKAQERAKERADKAEAKAAAAAEAAAAPAEEAPAEAAPAEETSES). The segment covering 97–118 (KKAEPGKKAQERAKERADKAEA) has biased composition (basic and acidic residues). Residues 119-147 (KAAAAAEAAAAPAEEAPAEAAPAEETSES) are compositionally biased toward low complexity.

The protein belongs to the bacterial ribosomal protein bS16 family.

In Hyphomonas neptunium (strain ATCC 15444), this protein is Small ribosomal subunit protein bS16.